The chain runs to 316 residues: Aspartate carbamoyltransferase catalytic subunit (316 aa).

Positions 66 and 67 each coordinate carbamoyl phosphate. Residue K94 participates in L-aspartate binding. Carbamoyl phosphate contacts are provided by R116, H146, and Q149. Residues R179 and R234 each coordinate L-aspartate. Residues G275 and P276 each coordinate carbamoyl phosphate.

This sequence belongs to the aspartate/ornithine carbamoyltransferase superfamily. ATCase family. In terms of assembly, heterododecamer (2C3:3R2) of six catalytic PyrB chains organized as two trimers (C3), and six regulatory PyrI chains organized as three dimers (R2).

The enzyme catalyses carbamoyl phosphate + L-aspartate = N-carbamoyl-L-aspartate + phosphate + H(+). It participates in pyrimidine metabolism; UMP biosynthesis via de novo pathway; (S)-dihydroorotate from bicarbonate: step 2/3. Catalyzes the condensation of carbamoyl phosphate and aspartate to form carbamoyl aspartate and inorganic phosphate, the committed step in the de novo pyrimidine nucleotide biosynthesis pathway. This Nitrosomonas eutropha (strain DSM 101675 / C91 / Nm57) protein is Aspartate carbamoyltransferase catalytic subunit.